Consider the following 696-residue polypeptide: UvrABC system protein B (696 aa).

Residues 45–434 (EGIGDGLSYQ…DEVVEQVVRP (390 aa)) enclose the Helicase ATP-binding domain. Residue 58–65 (GVTGSGKT) coordinates ATP. The Beta-hairpin signature appears at 111-134 (YYDYYQPEAYVPQRDLFIEKDSSV). The Helicase C-terminal domain maps to 450–616 (QVDDLLSEIH…GVVKRIKDII (167 aa)). A UVR domain is found at 647–682 (GKEIKRLEKQMLDHAKNLEFEKAAAVRDQLAKLKSQ).

The protein belongs to the UvrB family. As to quaternary structure, forms a heterotetramer with UvrA during the search for lesions. Interacts with UvrC in an incision complex.

It localises to the cytoplasm. In terms of biological role, the UvrABC repair system catalyzes the recognition and processing of DNA lesions. A damage recognition complex composed of 2 UvrA and 2 UvrB subunits scans DNA for abnormalities. Upon binding of the UvrA(2)B(2) complex to a putative damaged site, the DNA wraps around one UvrB monomer. DNA wrap is dependent on ATP binding by UvrB and probably causes local melting of the DNA helix, facilitating insertion of UvrB beta-hairpin between the DNA strands. Then UvrB probes one DNA strand for the presence of a lesion. If a lesion is found the UvrA subunits dissociate and the UvrB-DNA preincision complex is formed. This complex is subsequently bound by UvrC and the second UvrB is released. If no lesion is found, the DNA wraps around the other UvrB subunit that will check the other stand for damage. In Ralstonia nicotianae (strain ATCC BAA-1114 / GMI1000) (Ralstonia solanacearum), this protein is UvrABC system protein B.